Reading from the N-terminus, the 955-residue chain is 2-oxoglutarate dehydrogenase E1 component (955 aa).

Belongs to the alpha-ketoglutarate dehydrogenase family. Homodimer. Part of the 2-oxoglutarate dehydrogenase (OGDH) complex composed of E1 (2-oxoglutarate dehydrogenase), E2 (dihydrolipoamide succinyltransferase) and E3 (dihydrolipoamide dehydrogenase); the complex contains multiple copies of the three enzymatic components (E1, E2 and E3). Requires thiamine diphosphate as cofactor.

It catalyses the reaction N(6)-[(R)-lipoyl]-L-lysyl-[protein] + 2-oxoglutarate + H(+) = N(6)-[(R)-S(8)-succinyldihydrolipoyl]-L-lysyl-[protein] + CO2. E1 component of the 2-oxoglutarate dehydrogenase (OGDH) complex which catalyzes the decarboxylation of 2-oxoglutarate, the first step in the conversion of 2-oxoglutarate to succinyl-CoA and CO(2). This chain is 2-oxoglutarate dehydrogenase E1 component, found in Bacillus cereus (strain B4264).